Reading from the N-terminus, the 839-residue chain is Phenylalanine--tRNA ligase beta subunit (839 aa).

In terms of domain architecture, tRNA-binding spans 42–166 (GELTGPIVIG…PPSVEGHQLV (125 aa)). The region spanning 421-496 (PEMPRQTINA…RKIGFDRIKA (76 aa)) is the B5 domain. Positions 474, 480, 483, and 484 each coordinate Mg(2+). The 94-residue stretch at 745 to 838 (SSFPVAKEDV…AEETCGAQLR (94 aa)) folds into the FDX-ACB domain.

Belongs to the phenylalanyl-tRNA synthetase beta subunit family. Type 1 subfamily. As to quaternary structure, tetramer of two alpha and two beta subunits. Mg(2+) is required as a cofactor.

Its subcellular location is the cytoplasm. It catalyses the reaction tRNA(Phe) + L-phenylalanine + ATP = L-phenylalanyl-tRNA(Phe) + AMP + diphosphate + H(+). The chain is Phenylalanine--tRNA ligase beta subunit from Cutibacterium acnes (strain DSM 16379 / KPA171202) (Propionibacterium acnes).